A 281-amino-acid chain; its full sequence is Undecaprenyl-diphosphatase (281 aa).

6 helical membrane passes run 90-110, 113-133, 147-167, 191-211, 217-237, and 257-277; these read WLVTLGTIPIGVLGLLFQDSI, VLRGFVVIGTTLWLFALVLGA, LSWKHGLLFGLAQALALIPGV, SFLLAIPAVVLSGFYQLYDEL, IAWVPTAVATVVAFVVGYAVI, and IAAAVVVYALVLAGALPAFQG.

Belongs to the UppP family.

It localises to the cell membrane. The enzyme catalyses di-trans,octa-cis-undecaprenyl diphosphate + H2O = di-trans,octa-cis-undecaprenyl phosphate + phosphate + H(+). Its function is as follows. Catalyzes the dephosphorylation of undecaprenyl diphosphate (UPP). Confers resistance to bacitracin. The protein is Undecaprenyl-diphosphatase of Kineococcus radiotolerans (strain ATCC BAA-149 / DSM 14245 / SRS30216).